A 190-amino-acid polypeptide reads, in one-letter code: Elongation factor P (190 aa).

This sequence belongs to the elongation factor P family.

The protein localises to the cytoplasm. It functions in the pathway protein biosynthesis; polypeptide chain elongation. In terms of biological role, involved in peptide bond synthesis. Stimulates efficient translation and peptide-bond synthesis on native or reconstituted 70S ribosomes in vitro. Probably functions indirectly by altering the affinity of the ribosome for aminoacyl-tRNA, thus increasing their reactivity as acceptors for peptidyl transferase. This Pseudomonas fluorescens (strain ATCC BAA-477 / NRRL B-23932 / Pf-5) protein is Elongation factor P.